A 485-amino-acid chain; its full sequence is Ribosomal protein uS12 methylthiotransferase RimO (485 aa).

In terms of domain architecture, MTTase N-terminal spans P14–P124. Residues C23, C59, C88, C167, C171, and C174 each coordinate [4Fe-4S] cluster. A Radical SAM core domain is found at L153–E389. The TRAM domain occupies A392–H468.

This sequence belongs to the methylthiotransferase family. RimO subfamily. Requires [4Fe-4S] cluster as cofactor.

The protein resides in the cytoplasm. It carries out the reaction L-aspartate(89)-[ribosomal protein uS12]-hydrogen + (sulfur carrier)-SH + AH2 + 2 S-adenosyl-L-methionine = 3-methylsulfanyl-L-aspartate(89)-[ribosomal protein uS12]-hydrogen + (sulfur carrier)-H + 5'-deoxyadenosine + L-methionine + A + S-adenosyl-L-homocysteine + 2 H(+). Catalyzes the methylthiolation of an aspartic acid residue of ribosomal protein uS12. The protein is Ribosomal protein uS12 methylthiotransferase RimO of Deinococcus geothermalis (strain DSM 11300 / CIP 105573 / AG-3a).